A 703-amino-acid polypeptide reads, in one-letter code: Serotransferrin (703 aa).

Residues 1–19 form the signal peptide; sequence MDLSLHVALCLGMLALCLA. Transferrin-like domains are found at residues 27–341 and 354–686; these read VRWC…ALKE and VRWC…SLNK. Cystine bridges form between Cys-30-Cys-65 and Cys-40-Cys-56. Fe(3+) is bound by residues Asp-80 and Tyr-112. Disulfide bonds link Cys-135-Cys-218, Cys-180-Cys-193, and Cys-246-Cys-260. Thr-137, Lys-141, Ala-143, and Gly-144 together coordinate hydrogencarbonate. Tyr-212 lines the Fe(3+) pocket. Residue His-268 coordinates Fe(3+). The segment at 341–350 is connecting region; sequence EGVKEDDLAA. Intrachain disulfides connect Cys-357–Cys-389 and Cys-367–Cys-380. Residues Asp-404 and Tyr-443 each contribute to the Fe(3+) site. Disulfide bonds link Cys-414–Cys-698, Cys-432–Cys-659, Cys-466–Cys-545, Cys-490–Cys-687, Cys-500–Cys-514, Cys-511–Cys-528, and Cys-585–Cys-599. Residues Thr-468, Arg-472, Ala-474, and Gly-475 each contribute to the hydrogencarbonate site. Fe(3+) is bound at residue Tyr-539. Residue His-607 coordinates Fe(3+).

The protein belongs to the transferrin family. As to quaternary structure, monomer. As to expression, plasma.

Its subcellular location is the secreted. Functionally, transferrins are iron binding transport proteins which can bind two Fe(3+) ions in association with the binding of an anion, usually bicarbonate. It is responsible for the transport of iron from sites of absorption and heme degradation to those of storage and utilization. Serum transferrin may also have a further role in stimulating cell proliferation. The sequence is that of Serotransferrin (tf) from Xenopus tropicalis (Western clawed frog).